Here is a 389-residue protein sequence, read N- to C-terminus: Succinate--CoA ligase [ADP-forming] subunit beta (389 aa).

The ATP-grasp domain maps to 9–236; sequence RDMFEAHGVP…KDAADPLEAK (228 aa). Residues Lys45, 52–54, Ala94, and Glu99 contribute to the ATP site; that span reads GRG. Mg(2+) is bound by residues Asn191 and Asp205. Residues Asn256 and 318–320 contribute to the substrate site; that span reads GIT.

This sequence belongs to the succinate/malate CoA ligase beta subunit family. As to quaternary structure, heterotetramer of two alpha and two beta subunits. Mg(2+) is required as a cofactor.

The catalysed reaction is succinate + ATP + CoA = succinyl-CoA + ADP + phosphate. It carries out the reaction GTP + succinate + CoA = succinyl-CoA + GDP + phosphate. It functions in the pathway carbohydrate metabolism; tricarboxylic acid cycle; succinate from succinyl-CoA (ligase route): step 1/1. Succinyl-CoA synthetase functions in the citric acid cycle (TCA), coupling the hydrolysis of succinyl-CoA to the synthesis of either ATP or GTP and thus represents the only step of substrate-level phosphorylation in the TCA. The beta subunit provides nucleotide specificity of the enzyme and binds the substrate succinate, while the binding sites for coenzyme A and phosphate are found in the alpha subunit. This is Succinate--CoA ligase [ADP-forming] subunit beta from Pseudarthrobacter chlorophenolicus (strain ATCC 700700 / DSM 12829 / CIP 107037 / JCM 12360 / KCTC 9906 / NCIMB 13794 / A6) (Arthrobacter chlorophenolicus).